Consider the following 279-residue polypeptide: MKYIGAHVSAAGGVENAPKNAGLIGATAFALFTKNQRQWKAKTLTEKSILGFKEACRTLGYGPGQILAHDSYLINLGHPDRESLEKSRAAFVDEMERCQQLGISLLNFHPGSHLGRIDIDPCLATIAASINLALEQTQDVTAVIENTAGQGTNLGFDFSQIRTIIDQVEDKTRVGVCLDTCHSFSAGYDLKSEHGFHQTFETFDRVIGFDYLKGMHLNDSTKAMGSRVDRHASLGQGTLGMAPFERIMKDTRFDNIPLILETPDPSLWASEIQQLRAFL.

Residues His69, His109, Glu145, Asp179, His182, His216, Asp229, His231, and Glu261 each contribute to the Zn(2+) site.

This sequence belongs to the AP endonuclease 2 family. The cofactor is Zn(2+).

The catalysed reaction is Endonucleolytic cleavage to 5'-phosphooligonucleotide end-products.. In terms of biological role, endonuclease IV plays a role in DNA repair. It cleaves phosphodiester bonds at apurinic or apyrimidinic (AP) sites, generating a 3'-hydroxyl group and a 5'-terminal sugar phosphate. The polypeptide is Probable endonuclease 4 (Desulforapulum autotrophicum (strain ATCC 43914 / DSM 3382 / VKM B-1955 / HRM2) (Desulfobacterium autotrophicum)).